Reading from the N-terminus, the 382-residue chain is Mannitol-1-phosphate 5-dehydrogenase (382 aa).

Residue 4 to 15 coordinates NAD(+); that stretch reads AVHFGAGNIGRG.

It belongs to the mannitol dehydrogenase family.

The enzyme catalyses D-mannitol 1-phosphate + NAD(+) = beta-D-fructose 6-phosphate + NADH + H(+). In Vibrio parahaemolyticus serotype O3:K6 (strain RIMD 2210633), this protein is Mannitol-1-phosphate 5-dehydrogenase.